The chain runs to 275 residues: 2,3,4,5-tetrahydropyridine-2,6-dicarboxylate N-succinyltransferase (275 aa).

Positions 106 and 143 each coordinate substrate.

Belongs to the transferase hexapeptide repeat family. Homotrimer.

Its subcellular location is the cytoplasm. The catalysed reaction is (S)-2,3,4,5-tetrahydrodipicolinate + succinyl-CoA + H2O = (S)-2-succinylamino-6-oxoheptanedioate + CoA. Its pathway is amino-acid biosynthesis; L-lysine biosynthesis via DAP pathway; LL-2,6-diaminopimelate from (S)-tetrahydrodipicolinate (succinylase route): step 1/3. This is 2,3,4,5-tetrahydropyridine-2,6-dicarboxylate N-succinyltransferase from Cupriavidus pinatubonensis (strain JMP 134 / LMG 1197) (Cupriavidus necator (strain JMP 134)).